A 109-amino-acid chain; its full sequence is Flagellar hook-basal body complex protein FliE (109 aa).

It belongs to the FliE family.

Its subcellular location is the bacterial flagellum basal body. This Pseudomonas fluorescens (strain SBW25) protein is Flagellar hook-basal body complex protein FliE.